A 158-amino-acid chain; its full sequence is 3-dehydroquinate dehydratase (158 aa).

The active-site Proton acceptor is tyrosine 24. Asparagine 75, histidine 81, and aspartate 88 together coordinate substrate. Histidine 101 (proton donor) is an active-site residue. Residues 102–103 (LS) and arginine 112 each bind substrate.

Belongs to the type-II 3-dehydroquinase family. Homododecamer.

It carries out the reaction 3-dehydroquinate = 3-dehydroshikimate + H2O. The protein operates within metabolic intermediate biosynthesis; chorismate biosynthesis; chorismate from D-erythrose 4-phosphate and phosphoenolpyruvate: step 3/7. In terms of biological role, catalyzes a trans-dehydration via an enolate intermediate. The chain is 3-dehydroquinate dehydratase from Bartonella bacilliformis (strain ATCC 35685 / KC583 / Herrer 020/F12,63).